The sequence spans 555 residues: Dihydroxy-acid dehydratase (555 aa).

Asp-78 lines the Mg(2+) pocket. Cys-119 is a binding site for [2Fe-2S] cluster. 2 residues coordinate Mg(2+): Asp-120 and Lys-121. Lys-121 is subject to N6-carboxylysine. A [2Fe-2S] cluster-binding site is contributed by Cys-192. Glu-444 lines the Mg(2+) pocket. Ser-470 serves as the catalytic Proton acceptor.

Belongs to the IlvD/Edd family. Homodimer. It depends on [2Fe-2S] cluster as a cofactor. The cofactor is Mg(2+).

The catalysed reaction is (2R)-2,3-dihydroxy-3-methylbutanoate = 3-methyl-2-oxobutanoate + H2O. The enzyme catalyses (2R,3R)-2,3-dihydroxy-3-methylpentanoate = (S)-3-methyl-2-oxopentanoate + H2O. It participates in amino-acid biosynthesis; L-isoleucine biosynthesis; L-isoleucine from 2-oxobutanoate: step 3/4. Its pathway is amino-acid biosynthesis; L-valine biosynthesis; L-valine from pyruvate: step 3/4. In terms of biological role, functions in the biosynthesis of branched-chain amino acids. Catalyzes the dehydration of (2R,3R)-2,3-dihydroxy-3-methylpentanoate (2,3-dihydroxy-3-methylvalerate) into 2-oxo-3-methylpentanoate (2-oxo-3-methylvalerate) and of (2R)-2,3-dihydroxy-3-methylbutanoate (2,3-dihydroxyisovalerate) into 2-oxo-3-methylbutanoate (2-oxoisovalerate), the penultimate precursor to L-isoleucine and L-valine, respectively. The chain is Dihydroxy-acid dehydratase from Halalkalibacterium halodurans (strain ATCC BAA-125 / DSM 18197 / FERM 7344 / JCM 9153 / C-125) (Bacillus halodurans).